Here is a 167-residue protein sequence, read N- to C-terminus: U-scoloptoxin(08)-Er5a (167 aa).

An N-terminal signal peptide occupies residues 1 to 22; sequence MKTNCEFPLLCLLIVLVANVEG. A propeptide spanning residues 23-94 is cleaved from the precursor; that stretch reads EVEDTGLKMV…KRLWRNWERR (72 aa). RLWRNWE repeat units follow at residues 34-40, 61-67, and 86-92; these read RLWRNWE. At Gln-95 the chain carries Pyrrolidone carboxylic acid. The RLWRNWE 4; approximate repeat unit spans residues 107–113; that stretch reads ELWRNWE. A propeptide spanning residues 112–118 is cleaved from the precursor; sequence WEDLKRR. Gln-119 carries the pyrrolidone carboxylic acid modification. The stretch at 134–140 is one RLWRNWE 5 repeat; it reads RLWRNWE. Positions 139-167 are excised as a propeptide; it reads WEDNHATLRKRSADSLSRQKRLGKERGKE. Positions 147 to 167 are disordered; that stretch reads RKRSADSLSRQKRLGKERGKE.

Belongs to the scoloptoxin-08 family. In terms of tissue distribution, expressed by the venom gland.

The protein localises to the secreted. This Ethmostigmus rubripes (Giant centipede) protein is U-scoloptoxin(08)-Er5a.